The following is a 563-amino-acid chain: Arginine--tRNA ligase (563 aa).

The 'HIGH' region motif lies at 121–131; sequence PNIAKPMSMGH.

This sequence belongs to the class-I aminoacyl-tRNA synthetase family. Monomer.

It localises to the cytoplasm. The catalysed reaction is tRNA(Arg) + L-arginine + ATP = L-arginyl-tRNA(Arg) + AMP + diphosphate. This Leuconostoc citreum (strain KM20) protein is Arginine--tRNA ligase.